Here is a 706-residue protein sequence, read N- to C-terminus: Dihydroxyacetone synthase (706 aa).

Thiamine diphosphate is bound by residues histidine 76 and 126 to 128 (GPL). Mg(2+)-binding residues include aspartate 167, asparagine 197, and valine 199. Asparagine 197 provides a ligand contact to thiamine diphosphate. Residues histidine 273, glutamate 431, and phenylalanine 459 each contribute to the thiamine diphosphate site. Residue glutamate 431 is the Proton donor of the active site. Positions 704-706 (NHL) match the Microbody targeting signal motif.

This sequence belongs to the transketolase family. Mg(2+) is required as a cofactor. Ca(2+) serves as cofactor. The cofactor is Mn(2+). It depends on Co(2+) as a cofactor. Requires thiamine diphosphate as cofactor.

The protein resides in the peroxisome. The catalysed reaction is D-xylulose 5-phosphate + formaldehyde = dihydroxyacetone + D-glyceraldehyde 3-phosphate. Involved in assimilation of formaldehyde. This Candida boidinii (Yeast) protein is Dihydroxyacetone synthase (DAS1).